Consider the following 34-residue polypeptide: Cuticle protein 9 (34 aa).

The polypeptide is Cuticle protein 9 (Blaberus craniifer (Death's head cockroach)).